A 261-amino-acid chain; its full sequence is Kallikrein 1-related peptidase b26 (261 aa).

The first 18 residues, 1-18 (MWFLILFPALSLGGIDAA), serve as a signal peptide directing secretion. The propeptide at 19 to 24 (PPLQSR) is activation peptide. Residues 25–258 (VVGGFNCEKN…FNSWIKDTMM (234 aa)) enclose the Peptidase S1 domain. Disulfide bonds link cysteine 31-cysteine 173, cysteine 50-cysteine 66, cysteine 152-cysteine 219, cysteine 184-cysteine 198, and cysteine 209-cysteine 234. Histidine 65 functions as the Charge relay system in the catalytic mechanism. Asparagine 102 carries N-linked (GlcNAc...) asparagine glycosylation. Aspartate 120 serves as the catalytic Charge relay system. The active-site Charge relay system is the serine 213.

Belongs to the peptidase S1 family. Kallikrein subfamily.

The enzyme catalyses Preferential cleavage of Arg-|-Xaa bonds in small molecule substrates. Highly selective action to release kallidin (lysyl-bradykinin) from kininogen involves hydrolysis of Met-|-Xaa or Leu-|-Xaa.. Its function is as follows. Glandular kallikreins cleave Met-Lys and Arg-Ser bonds in kininogen to release Lys-bradykinin. Functionally, prorenin-converting enzyme cleaves mouse REN-2 prorenin at a dibasic site to yield mature renin. The chain is Kallikrein 1-related peptidase b26 (Klk1b26) from Mus musculus (Mouse).